The sequence spans 330 residues: Putative aminopeptidase (330 aa).

A divalent metal cation is bound by residues histidine 65 and aspartate 168. Glutamate 198 serves as the catalytic Proton acceptor. A divalent metal cation is bound by residues glutamate 199, aspartate 221, and histidine 307.

Belongs to the peptidase M42 family. Requires a divalent metal cation as cofactor.

This is Putative aminopeptidase (celM) from Acetivibrio thermocellus (Hungateiclostridium thermocellum).